The primary structure comprises 251 residues: tRNA1(Val) (adenine(37)-N6)-methyltransferase (251 aa).

The protein belongs to the methyltransferase superfamily. tRNA (adenine-N(6)-)-methyltransferase family.

It is found in the cytoplasm. The catalysed reaction is adenosine(37) in tRNA1(Val) + S-adenosyl-L-methionine = N(6)-methyladenosine(37) in tRNA1(Val) + S-adenosyl-L-homocysteine + H(+). In terms of biological role, specifically methylates the adenine in position 37 of tRNA(1)(Val) (anticodon cmo5UAC). This chain is tRNA1(Val) (adenine(37)-N6)-methyltransferase, found in Shewanella frigidimarina (strain NCIMB 400).